Reading from the N-terminus, the 292-residue chain is 4-hydroxy-tetrahydrodipicolinate synthase (292 aa).

Threonine 44 provides a ligand contact to pyruvate. Catalysis depends on tyrosine 132, which acts as the Proton donor/acceptor. Lysine 160 (schiff-base intermediate with substrate) is an active-site residue. Position 202 (isoleucine 202) interacts with pyruvate.

The protein belongs to the DapA family. As to quaternary structure, homotetramer; dimer of dimers.

The protein localises to the cytoplasm. The enzyme catalyses L-aspartate 4-semialdehyde + pyruvate = (2S,4S)-4-hydroxy-2,3,4,5-tetrahydrodipicolinate + H2O + H(+). It participates in amino-acid biosynthesis; L-lysine biosynthesis via DAP pathway; (S)-tetrahydrodipicolinate from L-aspartate: step 3/4. Catalyzes the condensation of (S)-aspartate-beta-semialdehyde [(S)-ASA] and pyruvate to 4-hydroxy-tetrahydrodipicolinate (HTPA). The polypeptide is 4-hydroxy-tetrahydrodipicolinate synthase (Magnetococcus marinus (strain ATCC BAA-1437 / JCM 17883 / MC-1)).